We begin with the raw amino-acid sequence, 270 residues long: Glucosamine-6-phosphate deaminase (270 aa).

Catalysis depends on Asp-72, which acts as the Proton acceptor; for enolization step. Catalysis depends on Asp-141, which acts as the For ring-opening step. The Proton acceptor; for ring-opening step role is filled by His-143. Glu-148 (for ring-opening step) is an active-site residue.

Belongs to the glucosamine/galactosamine-6-phosphate isomerase family. NagB subfamily. In terms of assembly, homohexamer.

The enzyme catalyses alpha-D-glucosamine 6-phosphate + H2O = beta-D-fructose 6-phosphate + NH4(+). It participates in amino-sugar metabolism; N-acetylneuraminate degradation; D-fructose 6-phosphate from N-acetylneuraminate: step 5/5. Allosterically activated by N-acetylglucosamine 6-phosphate (GlcNAc6P). In terms of biological role, catalyzes the reversible isomerization-deamination of glucosamine 6-phosphate (GlcN6P) to form fructose 6-phosphate (Fru6P) and ammonium ion. In Haemophilus influenzae (strain 86-028NP), this protein is Glucosamine-6-phosphate deaminase.